We begin with the raw amino-acid sequence, 244 residues long: Probable transcriptional regulatory protein Dgeo_2194 (244 aa).

Positions Met1–Arg21 are disordered.

This sequence belongs to the TACO1 family.

It is found in the cytoplasm. In Deinococcus geothermalis (strain DSM 11300 / CIP 105573 / AG-3a), this protein is Probable transcriptional regulatory protein Dgeo_2194.